Here is a 341-residue protein sequence, read N- to C-terminus: Ribosomal RNA small subunit methyltransferase H (341 aa).

Residues 47 to 49 (GGY), aspartate 64, phenylalanine 91, aspartate 109, and glutamine 116 contribute to the S-adenosyl-L-methionine site.

The protein belongs to the methyltransferase superfamily. RsmH family.

The protein localises to the cytoplasm. The catalysed reaction is cytidine(1402) in 16S rRNA + S-adenosyl-L-methionine = N(4)-methylcytidine(1402) in 16S rRNA + S-adenosyl-L-homocysteine + H(+). Its function is as follows. Specifically methylates the N4 position of cytidine in position 1402 (C1402) of 16S rRNA. This is Ribosomal RNA small subunit methyltransferase H from Sinorhizobium medicae (strain WSM419) (Ensifer medicae).